Here is a 614-residue protein sequence, read N- to C-terminus: Leucine aminopeptidase 2 (614 aa).

A peptide is bound by residues 139-141 (QCQ) and 271-276 (PYGGME). His-300 provides a ligand contact to Zn(2+). Residue Glu-301 is the Proton acceptor of the active site. Residues His-304 and Glu-323 each coordinate Zn(2+). Tyr-385 serves as the catalytic Proton donor.

Belongs to the peptidase M1 family. The cofactor is Zn(2+).

It is found in the cytoplasm. It localises to the nucleus. The catalysed reaction is an epoxide + H2O = an ethanediol. Aminopeptidase that preferentially cleaves di- and tripeptides. Also has low epoxide hydrolase activity (in vitro). Can hydrolyze the epoxide leukotriene LTA(4) but it forms preferentially 5,6-dihydroxy-7,9,11,14-eicosatetraenoic acid rather than the cytokine leukotriene B(4) as the product compared to the homologous mammalian enzyme (in vitro). The protein is Leucine aminopeptidase 2 of Aspergillus fumigatus (strain ATCC MYA-4609 / CBS 101355 / FGSC A1100 / Af293) (Neosartorya fumigata).